Consider the following 495-residue polypeptide: UDP-N-acetylmuramoyl-L-alanyl-D-glutamate--2,6-diaminopimelate ligase (495 aa).

Serine 29 provides a ligand contact to UDP-N-acetyl-alpha-D-muramoyl-L-alanyl-D-glutamate. Residue 111 to 117 (GTNGKTS) participates in ATP binding. UDP-N-acetyl-alpha-D-muramoyl-L-alanyl-D-glutamate-binding positions include 153–154 (TT), serine 180, glutamine 186, and arginine 188. An N6-carboxylysine modification is found at lysine 220. Meso-2,6-diaminopimelate-binding positions include arginine 384, 408 to 411 (DNPR), glycine 459, and glutamate 463. The Meso-diaminopimelate recognition motif signature appears at 408 to 411 (DNPR).

Belongs to the MurCDEF family. MurE subfamily. Requires Mg(2+) as cofactor. Carboxylation is probably crucial for Mg(2+) binding and, consequently, for the gamma-phosphate positioning of ATP.

Its subcellular location is the cytoplasm. The enzyme catalyses UDP-N-acetyl-alpha-D-muramoyl-L-alanyl-D-glutamate + meso-2,6-diaminopimelate + ATP = UDP-N-acetyl-alpha-D-muramoyl-L-alanyl-gamma-D-glutamyl-meso-2,6-diaminopimelate + ADP + phosphate + H(+). It functions in the pathway cell wall biogenesis; peptidoglycan biosynthesis. Its function is as follows. Catalyzes the addition of meso-diaminopimelic acid to the nucleotide precursor UDP-N-acetylmuramoyl-L-alanyl-D-glutamate (UMAG) in the biosynthesis of bacterial cell-wall peptidoglycan. The protein is UDP-N-acetylmuramoyl-L-alanyl-D-glutamate--2,6-diaminopimelate ligase of Xanthomonas oryzae pv. oryzae (strain MAFF 311018).